Reading from the N-terminus, the 97-residue chain is UPF0729 protein AAEL015238 (97 aa).

A disordered region spans residues 69–97 (EVAASGSGSNGTATAVGSEGEAEETKKSQ). Residues 74 to 83 (GSGSNGTATA) show a composition bias toward polar residues.

It belongs to the UPF0729 family.

The protein is UPF0729 protein AAEL015238 of Aedes aegypti (Yellowfever mosquito).